The primary structure comprises 911 residues: Leucine--tRNA ligase (911 aa).

Positions 42–52 match the 'HIGH' region motif; that stretch reads PYPSGKLHMGH. The 'KMSKS' region motif lies at 659 to 663; sequence TMSKS. K662 provides a ligand contact to ATP.

This sequence belongs to the class-I aminoacyl-tRNA synthetase family.

The protein resides in the cytoplasm. It catalyses the reaction tRNA(Leu) + L-leucine + ATP = L-leucyl-tRNA(Leu) + AMP + diphosphate. This chain is Leucine--tRNA ligase, found in Delftia acidovorans (strain DSM 14801 / SPH-1).